The chain runs to 254 residues: Putative biopolymer transport protein ExbB-like 1 (254 aa).

3 consecutive transmembrane segments (helical) span residues 39 to 59, 141 to 161, and 185 to 205; these read GGVVMFPLLLLSILALTTAFE, LETIIALAPLLGLLGTVTGLI, and IGEALITTAAGMMVAIFALLV.

Belongs to the ExbB/TolQ family.

Its subcellular location is the cell inner membrane. Its function is as follows. Involved in the TonB-dependent energy-dependent transport of various receptor-bound substrates. Protects ExbD from proteolytic degradation and functionally stabilizes TonB. The sequence is that of Putative biopolymer transport protein ExbB-like 1 from Synechocystis sp. (strain ATCC 27184 / PCC 6803 / Kazusa).